A 149-amino-acid chain; its full sequence is Putative eggshell protein (149 aa).

6 repeat units span residues 1-5 (YGYDK), 6-10 (YGYDK), 11-15 (YGYDK), 16-20 (YGYDK), 21-25 (YGYDK), and 26-30 (YGYEK). The tract at residues 1–64 (YGYDKYGYDK…YGYDKYGDDK (64 aa)) is 13 X 5 AA approximate tandem repeats of Y-G-Y-[DE]-K. A 7; truncated repeat occupies 31-34 (GYDK). Tandem repeats lie at residues 35–39 (YGYDK), 40–44 (YGYEK), and 45–49 (YGYDK). The 11; approximate repeat unit spans residues 50 to 54 (YGNEK). Repeat 12 spans residues 55–59 (YGYDK). The stretch at 60-64 (YGDDK) is one 13; approximate repeat. Basic and acidic residues predominate over residues 105–124 (YRKDHDKHDHDEHDHHDDHH). The disordered stretch occupies residues 105–149 (YRKDHDKHDHDEHDHHDDHHDHRHHHHEHDHHHHHEHDHKNGKGY). A compositionally biased stretch (basic residues) spans 125–141 (DHRHHHHEHDHHHHHEH).

The sequence is that of Putative eggshell protein from Schistosoma mansoni (Blood fluke).